Reading from the N-terminus, the 274-residue chain is Formamidopyrimidine-DNA glycosylase (274 aa).

The active-site Schiff-base intermediate with DNA is Pro2. Glu3 serves as the catalytic Proton donor. Residue Lys60 is the Proton donor; for beta-elimination activity of the active site. 2 residues coordinate DNA: His93 and Arg112. The segment at 240–274 (FVYGRKGEPCKRCGTPIEKTVVAGRGTHYCPRCQR) adopts an FPG-type zinc-finger fold. Arg264 (proton donor; for delta-elimination activity) is an active-site residue.

This sequence belongs to the FPG family. As to quaternary structure, monomer. Requires Zn(2+) as cofactor.

The enzyme catalyses Hydrolysis of DNA containing ring-opened 7-methylguanine residues, releasing 2,6-diamino-4-hydroxy-5-(N-methyl)formamidopyrimidine.. It catalyses the reaction 2'-deoxyribonucleotide-(2'-deoxyribose 5'-phosphate)-2'-deoxyribonucleotide-DNA = a 3'-end 2'-deoxyribonucleotide-(2,3-dehydro-2,3-deoxyribose 5'-phosphate)-DNA + a 5'-end 5'-phospho-2'-deoxyribonucleoside-DNA + H(+). Functionally, involved in base excision repair of DNA damaged by oxidation or by mutagenic agents. Acts as a DNA glycosylase that recognizes and removes damaged bases. Has a preference for oxidized purines, such as 7,8-dihydro-8-oxoguanine (8-oxoG). Has AP (apurinic/apyrimidinic) lyase activity and introduces nicks in the DNA strand. Cleaves the DNA backbone by beta-delta elimination to generate a single-strand break at the site of the removed base with both 3'- and 5'-phosphates. The chain is Formamidopyrimidine-DNA glycosylase from Geobacillus kaustophilus (strain HTA426).